Reading from the N-terminus, the 504-residue chain is MRRSISSKAKSFLHRNLLYSGNSGTSPSSSFSICGFCFSRRAYSNGSDYREMLRNGIRFMKLDDSLDLFFHMVQCRPLPSIADFSRLLSAISKMKKYDVVIYLWEQMQMLGIPHNLCTCNILLNCFCRCSQLSLALSFLGKMIKLGHEPSIVTFGSLLNGFCRGDRVYDALYMFDQMVGMGYKPNVVIYNTIIDGLCKSKQVDNALDLLNRMEKDGIGPDVVTYNSLISGLCSSGRWSDATRMVSCMTKREIYPDVFTFNALIDACVKEGRVSEAEEFYEEMIRRSLDPDIVTYSLLIYGLCMYSRLDEAEEMFGFMVSKGCFPDVVTYSILINGYCKSKKVEHGMKLFCEMSQRGVVRNTVTYTILIQGYCRAGKLNVAEEIFRRMVFCGVHPNIITYNVLLHGLCDNGKIEKALVILADMQKNGMDADIVTYNIIIRGMCKAGEVADAWDIYCSLNCQGLMPDIWTYTTMMLGLYKKGLRREADALFRKMKEDGILPNECYV.

A mitochondrion-targeting transit peptide spans 1-43; sequence MRRSISSKAKSFLHRNLLYSGNSGTSPSSSFSICGFCFSRRAY. PPR repeat units follow at residues 45 to 79, 80 to 114, 115 to 149, 150 to 184, 185 to 219, 220 to 254, 255 to 289, 290 to 324, 325 to 359, 360 to 394, 395 to 429, 430 to 464, and 465 to 499; these read NGSDYREMLRNGIRFMKLDDSLDLFFHMVQCRPLP, SIADFSRLLSAISKMKKYDVVIYLWEQMQMLGIPH, NLCTCNILLNCFCRCSQLSLALSFLGKMIKLGHEP, SIVTFGSLLNGFCRGDRVYDALYMFDQMVGMGYKP, NVVIYNTIIDGLCKSKQVDNALDLLNRMEKDGIGP, DVVTYNSLISGLCSSGRWSDATRMVSCMTKREIYP, DVFTFNALIDACVKEGRVSEAEEFYEEMIRRSLDP, DIVTYSLLIYGLCMYSRLDEAEEMFGFMVSKGCFP, DVVTYSILINGYCKSKKVEHGMKLFCEMSQRGVVR, NTVTYTILIQGYCRAGKLNVAEEIFRRMVFCGVHP, NIITYNVLLHGLCDNGKIEKALVILADMQKNGMDA, DIVTYNIIIRGMCKAGEVADAWDIYCSLNCQGLMP, and DIWTYTTMMLGLYKKGLRREADALFRKMKEDGILP.

The protein belongs to the PPR family. P subfamily.

Its subcellular location is the mitochondrion. The polypeptide is Pentatricopeptide repeat-containing protein At5g16640, mitochondrial (Arabidopsis thaliana (Mouse-ear cress)).